An 89-amino-acid polypeptide reads, in one-letter code: Small ribosomal subunit protein uS15 (89 aa).

The protein belongs to the universal ribosomal protein uS15 family. As to quaternary structure, part of the 30S ribosomal subunit. Forms a bridge to the 50S subunit in the 70S ribosome, contacting the 23S rRNA.

One of the primary rRNA binding proteins, it binds directly to 16S rRNA where it helps nucleate assembly of the platform of the 30S subunit by binding and bridging several RNA helices of the 16S rRNA. In terms of biological role, forms an intersubunit bridge (bridge B4) with the 23S rRNA of the 50S subunit in the ribosome. The sequence is that of Small ribosomal subunit protein uS15 from Exiguobacterium sp. (strain ATCC BAA-1283 / AT1b).